We begin with the raw amino-acid sequence, 106 residues long: ATP-dependent Clp protease adapter protein ClpS (106 aa).

The protein belongs to the ClpS family. In terms of assembly, binds to the N-terminal domain of the chaperone ClpA.

Its function is as follows. Involved in the modulation of the specificity of the ClpAP-mediated ATP-dependent protein degradation. In Salmonella gallinarum (strain 287/91 / NCTC 13346), this protein is ATP-dependent Clp protease adapter protein ClpS.